The chain runs to 347 residues: Sulfate/thiosulfate import ATP-binding protein CysA 1 (347 aa).

The 235-residue stretch at 3 to 237 (VRVESLRKEF…PVSPFVYGFI (235 aa)) folds into the ABC transporter domain. 35–42 (GPSGSGKT) provides a ligand contact to ATP.

The protein belongs to the ABC transporter superfamily. Sulfate/tungstate importer (TC 3.A.1.6) family. The complex is composed of two ATP-binding proteins (CysA), two transmembrane proteins (CysT and CysW) and a solute-binding protein (CysP).

The protein resides in the cell inner membrane. It catalyses the reaction sulfate(out) + ATP + H2O = sulfate(in) + ADP + phosphate + H(+). It carries out the reaction thiosulfate(out) + ATP + H2O = thiosulfate(in) + ADP + phosphate + H(+). In terms of biological role, part of the ABC transporter complex CysAWTP involved in sulfate/thiosulfate import. Responsible for energy coupling to the transport system. This Rhizobium meliloti (strain 1021) (Ensifer meliloti) protein is Sulfate/thiosulfate import ATP-binding protein CysA 1.